The sequence spans 430 residues: tRNA-2-methylthio-N(6)-dimethylallyladenosine synthase (430 aa).

The MTTase N-terminal domain occupies 2 to 111 (KKIHIKTYGC…IPQAVERAIN (110 aa)). [4Fe-4S] cluster contacts are provided by C11, C47, C76, C147, C151, and C154. The region spanning 133–364 (RNSKHHAWIT…LNLQKEINKQ (232 aa)) is the Radical SAM core domain. Residues 367 to 428 (ENYLNKTVEI…AGPLYGDIIK (62 aa)) form the TRAM domain.

It belongs to the methylthiotransferase family. MiaB subfamily. In terms of assembly, monomer. It depends on [4Fe-4S] cluster as a cofactor.

The protein resides in the cytoplasm. The catalysed reaction is N(6)-dimethylallyladenosine(37) in tRNA + (sulfur carrier)-SH + AH2 + 2 S-adenosyl-L-methionine = 2-methylsulfanyl-N(6)-dimethylallyladenosine(37) in tRNA + (sulfur carrier)-H + 5'-deoxyadenosine + L-methionine + A + S-adenosyl-L-homocysteine + 2 H(+). Catalyzes the methylthiolation of N6-(dimethylallyl)adenosine (i(6)A), leading to the formation of 2-methylthio-N6-(dimethylallyl)adenosine (ms(2)i(6)A) at position 37 in tRNAs that read codons beginning with uridine. This chain is tRNA-2-methylthio-N(6)-dimethylallyladenosine synthase, found in Thermosipho melanesiensis (strain DSM 12029 / CIP 104789 / BI429).